Reading from the N-terminus, the 292-residue chain is ATP synthase gamma chain (292 aa).

It belongs to the ATPase gamma chain family. In terms of assembly, F-type ATPases have 2 components, CF(1) - the catalytic core - and CF(0) - the membrane proton channel. CF(1) has five subunits: alpha(3), beta(3), gamma(1), delta(1), epsilon(1). CF(0) has three main subunits: a, b and c.

It localises to the cell membrane. Functionally, produces ATP from ADP in the presence of a proton gradient across the membrane. The gamma chain is believed to be important in regulating ATPase activity and the flow of protons through the CF(0) complex. The polypeptide is ATP synthase gamma chain (Streptococcus pneumoniae (strain JJA)).